Reading from the N-terminus, the 213-residue chain is Probable nicotinate-nucleotide adenylyltransferase (213 aa).

Belongs to the NadD family.

It catalyses the reaction nicotinate beta-D-ribonucleotide + ATP + H(+) = deamido-NAD(+) + diphosphate. The protein operates within cofactor biosynthesis; NAD(+) biosynthesis; deamido-NAD(+) from nicotinate D-ribonucleotide: step 1/1. Catalyzes the reversible adenylation of nicotinate mononucleotide (NaMN) to nicotinic acid adenine dinucleotide (NaAD). The sequence is that of Probable nicotinate-nucleotide adenylyltransferase from Escherichia coli O45:K1 (strain S88 / ExPEC).